Consider the following 259-residue polypeptide: 4-hydroxy-tetrahydrodipicolinate reductase (259 aa).

NAD(+) is bound by residues 9–14 and E35; that span reads GAGGRM. Position 36 (R36) interacts with NADP(+). NAD(+)-binding positions include 92-94 and 116-119; these read GTT and APNM. The active-site Proton donor/acceptor is H149. H150 contacts (S)-2,3,4,5-tetrahydrodipicolinate. The active-site Proton donor is K153. 159-160 is a binding site for (S)-2,3,4,5-tetrahydrodipicolinate; it reads GT.

This sequence belongs to the DapB family.

Its subcellular location is the cytoplasm. The catalysed reaction is (S)-2,3,4,5-tetrahydrodipicolinate + NAD(+) + H2O = (2S,4S)-4-hydroxy-2,3,4,5-tetrahydrodipicolinate + NADH + H(+). The enzyme catalyses (S)-2,3,4,5-tetrahydrodipicolinate + NADP(+) + H2O = (2S,4S)-4-hydroxy-2,3,4,5-tetrahydrodipicolinate + NADPH + H(+). The protein operates within amino-acid biosynthesis; L-lysine biosynthesis via DAP pathway; (S)-tetrahydrodipicolinate from L-aspartate: step 4/4. In terms of biological role, catalyzes the conversion of 4-hydroxy-tetrahydrodipicolinate (HTPA) to tetrahydrodipicolinate. In Nitratidesulfovibrio vulgaris (strain DP4) (Desulfovibrio vulgaris), this protein is 4-hydroxy-tetrahydrodipicolinate reductase.